Here is a 422-residue protein sequence, read N- to C-terminus: Glutamyl-tRNA reductase (422 aa).

Substrate is bound by residues 49-52 (TCNR), S107, 112-114 (EPQ), and Q118. The Nucleophile role is filled by C50. Residue 187–192 (GAGETI) coordinates NADP(+).

It belongs to the glutamyl-tRNA reductase family. In terms of assembly, homodimer.

It catalyses the reaction (S)-4-amino-5-oxopentanoate + tRNA(Glu) + NADP(+) = L-glutamyl-tRNA(Glu) + NADPH + H(+). It functions in the pathway porphyrin-containing compound metabolism; protoporphyrin-IX biosynthesis; 5-aminolevulinate from L-glutamyl-tRNA(Glu): step 1/2. In terms of biological role, catalyzes the NADPH-dependent reduction of glutamyl-tRNA(Glu) to glutamate 1-semialdehyde (GSA). This chain is Glutamyl-tRNA reductase, found in Stutzerimonas stutzeri (strain A1501) (Pseudomonas stutzeri).